The chain runs to 449 residues: MFS acetylaranotin efflux transporter ataA (449 aa).

7 consecutive transmembrane segments (helical) span residues 6 to 26 (SVYVWLTVVVKDNTIIATAIP), 45 to 65 (YLLVTCMFQLIFGKLYGYFPI), 67 to 87 (WVFLAAIIIFEIGSAVCGAAP), 115 to 135 (FYINLPIGAVVIVVLLQFLHV), 155 to 175 (LGVVTFLPAIVCLLLALQWGG), 182 to 202 (NGRIIALFVLAGVLLIAFLAI), and 227 to 247 (LFMTLFAGAYFTIIYYLPIWF). Asn-252 carries N-linked (GlcNAc...) asparagine glycosylation. 5 consecutive transmembrane segments (helical) span residues 260 to 280 (IMCLPLMLSMVIFSFVAGGGV), 287 to 307 (VPFFYIATVLAAAGAGLMTTF), 321 to 341 (VLLGSGVGMGIQLPIIAVQAV), 349 to 369 (VGTAILTFCQTFGGAIFVSVA), and 420 to 440 (ALVSAWYLAVALFSVAVLGAV).

The protein belongs to the major facilitator superfamily.

It is found in the cell membrane. In terms of biological role, efflux pump that may provide the dual role of acetylaranotin export and self-protection by allowing the fungus to evade the harmful effect of its own acetylaranotin production. The protein is MFS acetylaranotin efflux transporter ataA of Aspergillus terreus (strain NIH 2624 / FGSC A1156).